Consider the following 425-residue polypeptide: Proline--tRNA ligase (425 aa).

The protein belongs to the class-II aminoacyl-tRNA synthetase family. ProS type 2 subfamily. As to quaternary structure, homodimer.

Its subcellular location is the cytoplasm. It catalyses the reaction tRNA(Pro) + L-proline + ATP = L-prolyl-tRNA(Pro) + AMP + diphosphate. Catalyzes the attachment of proline to tRNA(Pro) in a two-step reaction: proline is first activated by ATP to form Pro-AMP and then transferred to the acceptor end of tRNA(Pro). This is Proline--tRNA ligase from Anaplasma marginale (strain St. Maries).